The sequence spans 318 residues: Acetyl-coenzyme A carboxylase carboxyl transferase subunit alpha (318 aa).

A CoA carboxyltransferase C-terminal domain is found at 39–292; the sequence is LTDKSEKQLR…GDSIAAELPD (254 aa).

It belongs to the AccA family. As to quaternary structure, acetyl-CoA carboxylase is a heterohexamer composed of biotin carboxyl carrier protein (AccB), biotin carboxylase (AccC) and two subunits each of ACCase subunit alpha (AccA) and ACCase subunit beta (AccD).

Its subcellular location is the cytoplasm. The catalysed reaction is N(6)-carboxybiotinyl-L-lysyl-[protein] + acetyl-CoA = N(6)-biotinyl-L-lysyl-[protein] + malonyl-CoA. It participates in lipid metabolism; malonyl-CoA biosynthesis; malonyl-CoA from acetyl-CoA: step 1/1. In terms of biological role, component of the acetyl coenzyme A carboxylase (ACC) complex. First, biotin carboxylase catalyzes the carboxylation of biotin on its carrier protein (BCCP) and then the CO(2) group is transferred by the carboxyltransferase to acetyl-CoA to form malonyl-CoA. The polypeptide is Acetyl-coenzyme A carboxylase carboxyl transferase subunit alpha (Gluconacetobacter diazotrophicus (strain ATCC 49037 / DSM 5601 / CCUG 37298 / CIP 103539 / LMG 7603 / PAl5)).